The sequence spans 409 residues: Failed axon connections homolog (409 aa).

A helical transmembrane segment spans residues Tyr68–Ile88. Positions Asp372–Lys409 are disordered.

It belongs to the FAX family.

The protein resides in the membrane. Functionally, may play a role in axonal development. The protein is Failed axon connections homolog (Faxc) of Rattus norvegicus (Rat).